The following is an 808-amino-acid chain: Anaphase-promoting complex subunit 4 (808 aa).

Tyrosine 469 is subject to Phosphotyrosine. Phosphoserine is present on residues serine 757 and serine 758. A Glycyl lysine isopeptide (Lys-Gly) (interchain with G-Cter in SUMO2) cross-link involves residue lysine 772. Phosphoserine is present on residues serine 777 and serine 779. A Glycyl lysine isopeptide (Lys-Gly) (interchain with G-Cter in SUMO2) cross-link involves residue lysine 798.

This sequence belongs to the APC4 family. In terms of assembly, the mammalian APC/C is composed at least of 14 distinct subunits ANAPC1, ANAPC2, CDC27/APC3, ANAPC4, ANAPC5, CDC16/APC6, ANAPC7, CDC23/APC8, ANAPC10, ANAPC11, CDC26/APC12, ANAPC13, ANAPC15 and ANAPC16 that assemble into a complex of at least 19 chains with a combined molecular mass of around 1.2 MDa; APC/C interacts with FZR1 and FBXO5. In the context of the APC/C complex, directly interacts with UBE2S. Interacts with FBXO43.

Its subcellular location is the nucleus. Its pathway is protein modification; protein ubiquitination. In terms of biological role, component of the anaphase promoting complex/cyclosome (APC/C), a cell cycle-regulated E3 ubiquitin ligase that controls progression through mitosis and the G1 phase of the cell cycle. The APC/C complex acts by mediating ubiquitination and subsequent degradation of target proteins: it mainly mediates the formation of 'Lys-11'-linked polyubiquitin chains and, to a lower extent, the formation of 'Lys-48'- and 'Lys-63'-linked polyubiquitin chains. The APC/C complex catalyzes assembly of branched 'Lys-11'-/'Lys-48'-linked branched ubiquitin chains on target proteins. The sequence is that of Anaphase-promoting complex subunit 4 (ANAPC4) from Homo sapiens (Human).